Reading from the N-terminus, the 72-residue chain is Probable transcription factor elt-4 (72 aa).

Residues 16 to 40 form a GATA-type zinc finger; that stretch reads CSNCNGTNTTLWRRKAEGDPVCNAC.

It is found in the nucleus. Functionally, probable transcription factor. Plays a role in regulating heme-dependent expression of heme transporter hrg-1. Modulates lifespan in a daf-16-dependent manner. In Caenorhabditis elegans, this protein is Probable transcription factor elt-4.